We begin with the raw amino-acid sequence, 327 residues long: MFPTIRPRRLRQTDVLRRMVRENTLTVNDLIYPLFAVPGNAIAKEVVSMPGVYQLSVDKIVDEAKEVRDLGIPAIILFGIPEDKDTDATGAWHDCGIVQKATEAVKKAVPDLVVIVDTCLCEYTNHGHCGYLETGDLTGRVLNDPTLELLKKTAVSQANAGADVIAPSGMMDGFVQAIREALDDHDFQNIPILSYAAKYASAYYGPFRDAADSSPQFGDRRTYQMDPGNSREALKEVELDLLEGADMVMVKPALSYMDIIWRIKEMTNLPVAAYNVSGEYSMVKAAALNGWIDEQKVTLETLTSFKRAGADLILTYHAKDAARWLQD.

C119, C121, and C129 together coordinate Zn(2+). The active-site Schiff-base intermediate with substrate is K198. 5-aminolevulinate is bound by residues R208 and R220. Mg(2+) is bound at residue E236. The active-site Schiff-base intermediate with substrate is the K251. Residues S277 and Y316 each contribute to the 5-aminolevulinate site.

Belongs to the ALAD family. As to quaternary structure, homooctamer. Zn(2+) serves as cofactor.

The catalysed reaction is 2 5-aminolevulinate = porphobilinogen + 2 H2O + H(+). It functions in the pathway porphyrin-containing compound metabolism; protoporphyrin-IX biosynthesis; coproporphyrinogen-III from 5-aminolevulinate: step 1/4. Catalyzes an early step in the biosynthesis of tetrapyrroles. Binds two molecules of 5-aminolevulinate per subunit, each at a distinct site, and catalyzes their condensation to form porphobilinogen. This Synechocystis sp. (strain ATCC 27184 / PCC 6803 / Kazusa) protein is Delta-aminolevulinic acid dehydratase (hemB).